We begin with the raw amino-acid sequence, 293 residues long: Large ribosomal subunit protein uL4 (293 aa).

Basic and acidic residues-rich tracts occupy residues 1–14 (MAEE…EKTP) and 33–55 (KTTE…ESTK). Disordered regions lie at residues 1 to 72 (MAEE…IKSE) and 130 to 166 (QRQG…STRS).

It belongs to the universal ribosomal protein uL4 family. As to quaternary structure, part of the 50S ribosomal subunit.

One of the primary rRNA binding proteins, this protein initially binds near the 5'-end of the 23S rRNA. It is important during the early stages of 50S assembly. It makes multiple contacts with different domains of the 23S rRNA in the assembled 50S subunit and ribosome. Functionally, forms part of the polypeptide exit tunnel. The protein is Large ribosomal subunit protein uL4 of Mycoplasma mobile (strain ATCC 43663 / 163K / NCTC 11711) (Mesomycoplasma mobile).